The primary structure comprises 152 residues: Nucleoside diphosphate kinase (152 aa).

Positions 9, 57, 85, 91, 102, and 112 each coordinate ATP. Histidine 115 acts as the Pros-phosphohistidine intermediate in catalysis.

This sequence belongs to the NDK family. In terms of assembly, homotetramer. Mg(2+) serves as cofactor.

Its subcellular location is the cytoplasm. The catalysed reaction is a 2'-deoxyribonucleoside 5'-diphosphate + ATP = a 2'-deoxyribonucleoside 5'-triphosphate + ADP. It catalyses the reaction a ribonucleoside 5'-diphosphate + ATP = a ribonucleoside 5'-triphosphate + ADP. In terms of biological role, major role in the synthesis of nucleoside triphosphates other than ATP. The ATP gamma phosphate is transferred to the NDP beta phosphate via a ping-pong mechanism, using a phosphorylated active-site intermediate. In Rhodopirellula baltica (strain DSM 10527 / NCIMB 13988 / SH1), this protein is Nucleoside diphosphate kinase.